Here is a 268-residue protein sequence, read N- to C-terminus: Protein MGF 300-1L (268 aa).

The Cytoplasmic segment spans residues 1–175 (MVSLTTCCLK…QTFKIFYAKN (175 aa)). Residues 176 to 193 (YSLSTLYCIFLAIYYKRY) traverse the membrane as a helical segment. Residues 194-268 (TALRKMVKIY…MYAFSQNNFW (75 aa)) are Extracellular-facing.

Belongs to the asfivirus MGF 300 family.

Its subcellular location is the host membrane. Plays a role in virus cell tropism, and may be required for efficient virus replication in macrophages. The sequence is that of Protein MGF 300-1L from African swine fever virus (isolate Tick/South Africa/Pretoriuskop Pr4/1996) (ASFV).